A 109-amino-acid polypeptide reads, in one-letter code: Fluoride-specific ion channel FluC (109 aa).

Transmembrane regions (helical) follow at residues 21–41, 52–72, and 84–104; these read LTLN…GFFV, ILFS…YFLY, and IIFF…GFWI.

It belongs to the fluoride channel Fluc/FEX (TC 1.A.43) family.

The protein localises to the cell inner membrane. It catalyses the reaction fluoride(in) = fluoride(out). Its function is as follows. Fluoride-specific ion channel. Important for reducing fluoride concentration in the cell, thus reducing its toxicity. In Prochlorococcus marinus (strain MIT 9301), this protein is Fluoride-specific ion channel FluC.